The chain runs to 314 residues: tRNA dimethylallyltransferase (314 aa).

ATP is bound at residue 13–20; it reads GPTAIGKT. 15–20 contributes to the substrate binding site; sequence TAIGKT. The interval 38 to 41 is interaction with substrate tRNA; that stretch reads DSMQ.

This sequence belongs to the IPP transferase family. Monomer. Mg(2+) serves as cofactor.

The catalysed reaction is adenosine(37) in tRNA + dimethylallyl diphosphate = N(6)-dimethylallyladenosine(37) in tRNA + diphosphate. Catalyzes the transfer of a dimethylallyl group onto the adenine at position 37 in tRNAs that read codons beginning with uridine, leading to the formation of N6-(dimethylallyl)adenosine (i(6)A). The protein is tRNA dimethylallyltransferase of Desulfotalea psychrophila (strain LSv54 / DSM 12343).